A 1396-amino-acid polypeptide reads, in one-letter code: Sterol 3-beta-glucosyltransferase (1396 aa).

The span at 1 to 16 shows a compositional bias: basic and acidic residues; the sequence is MRPFIDDAKRRAERRL. Disordered regions lie at residues 1 to 21, 40 to 64, 83 to 196, and 209 to 232; these read MRPFIDDAKRRAERRLSASRQ, DADDAQMDYTAPPSSNDSRDGMQYM, ARFD…RAAP, and ETENPEENPQTLEEKEQGVSKKSQ. Over residues 94 to 107 the composition is skewed to basic and acidic residues; it reads ETRTRPRFLSEKPF. The segment covering 186–196 has biased composition (low complexity); it reads RPRSATPRAAP. One can recognise a GRAM 1 domain in the interval 238 to 273; that stretch reads RQLMEMFRFPTPEKVVVEYACSLLQSMLLQGYMYVT. The PH domain maps to 289–388; it reads RVIKSGYIYK…WVRALQKVIF (100 aa). Disordered regions lie at residues 460 to 532 and 571 to 627; these read GTPT…SSSS and TIHT…ESKD. 2 stretches are compositionally biased toward polar residues: residues 484–532 and 571–584; these read GSQN…SSSS and TIHTWQQRTSGTAR. The span at 588 to 602 shows a compositional bias: basic and acidic residues; the sequence is RHSDEITRSTTEHGL. One can recognise a GRAM 2 domain in the interval 717 to 783; it reads ERFRAHFALP…HDIENVEKEK (67 aa). UDP-alpha-D-glucose is bound by residues Ser-905, Arg-906, Asp-908, Ala-1208, His-1210, His-1223, Gly-1227, Thr-1228, Asp-1247, and Gln-1248. A compositionally biased stretch (low complexity) spans 1324 to 1343; that stretch reads SSISSTPFSPTPSTKTSDDQ. The disordered stretch occupies residues 1324–1346; that stretch reads SSISSTPFSPTPSTKTSDDQNAN.

This sequence belongs to the glycosyltransferase 28 family.

The protein resides in the cytoplasm. Its subcellular location is the preautophagosomal structure membrane. It carries out the reaction a sterol + UDP-alpha-D-glucose = a sterol 3-beta-D-glucoside + UDP + H(+). The catalysed reaction is ergosterol + UDP-alpha-D-glucose = ergosteryl 3-beta-D-glucoside + UDP + H(+). Its function is as follows. Sterol glycosyltransferase responsible for the glycosylation of ergosterol to form ergosterol-glucoside. In Emericella nidulans (strain FGSC A4 / ATCC 38163 / CBS 112.46 / NRRL 194 / M139) (Aspergillus nidulans), this protein is Sterol 3-beta-glucosyltransferase.